Consider the following 723-residue polypeptide: E3 ubiquitin-protein ligase LRSAM1 (723 aa).

LRR repeat units lie at residues 30-51, 56-77, 82-103, 105-127, 128-149, and 151-172; these read ADDI…AFAT, QKKV…SCSL, TIKV…LGQL, ALQV…GNLT, QLQT…VGEL, and SLRT…LAHV. At Ser234 the chain carries Phosphoserine. Coiled-coil stretches lie at residues 254–380 and 510–562; these read SDYE…TESL and ALSS…KPLS. The interval 282 to 314 is disordered; sequence TQLLQQSSSQKDEILQTVKEEQSRLEQGLSEHQ. A compositionally biased stretch (basic and acidic residues) spans 291–314; the sequence is QKDEILQTVKEEQSRLEQGLSEHQ. Residues 569–632 enclose the SAM domain; that stretch reads GMERQLVALL…LRRVQELLDA (64 aa). Position 604 is a phosphoserine (Ser604). The tract at residues 642 to 665 is disordered; the sequence is PMGEVVTPTAPQEPPESVRPSAPP. 2 consecutive short sequence motifs (PTAP motif) follow at residues 649 to 652 and 661 to 664; these read PTAP and PSAP. An RING-type zinc finger spans residues 675–710; it reads CVVCLEREAQMIFLNCGHVCCCQQCCQPLRTCPLCR.

As to quaternary structure, interacts with TSG101. Interacts with PHF23. Interacts with FUS. Post-translationally, ubiquitination promoted by PHF23 leads to proteasomal degradation. As to expression, highly expressed in adult spinal cord motoneurons as well as in fetal spinal cord and muscle tissue.

It localises to the cytoplasm. The enzyme catalyses S-ubiquitinyl-[E2 ubiquitin-conjugating enzyme]-L-cysteine + [acceptor protein]-L-lysine = [E2 ubiquitin-conjugating enzyme]-L-cysteine + N(6)-ubiquitinyl-[acceptor protein]-L-lysine.. The protein operates within protein modification; protein ubiquitination. E3 ubiquitin-protein ligase that mediates monoubiquitination of TSG101 at multiple sites, leading to inactivate the ability of TSG101 to sort endocytic (EGF receptors) and exocytic (HIV-1 viral proteins) cargos. Bacterial recognition protein that defends the cytoplasm from invasive pathogens. Localizes to several intracellular bacterial pathogens and generates the bacteria-associated ubiquitin signal leading to autophagy-mediated intracellular bacteria degradation (xenophagy). This chain is E3 ubiquitin-protein ligase LRSAM1, found in Homo sapiens (Human).